The primary structure comprises 112 residues: Flowering-promoting factor 1-like protein 2 (112 aa).

Belongs to the FPF1 family. Expressed in leaves and in some parts of the flowers, mainly in the sepals.

In terms of biological role, modulates the competence to flowering of apical meristems. The protein is Flowering-promoting factor 1-like protein 2 (FLP2) of Arabidopsis thaliana (Mouse-ear cress).